A 998-amino-acid chain; its full sequence is UPF0182 protein AAur_2732 (998 aa).

7 helical membrane passes run 18–38, 64–84, 115–135, 168–188, 211–231, 260–280, and 287–307; these read GALTPTLIVVAVAVVGFIFFA, IITFLIGFAMMFAAVFFAIRI, VVMIGLPILFGLFAGSAAASQ, FLGFITGFLISIAVVAGIAGI, QIHIAVTGALFLILLGVNFWL, AILAVAAGLVAILFIIAAIIG, and IGTAMLVITAILAGGVYPWVI. 3 disordered regions span residues 490–518, 888–923, and 971–998; these read GAPDGAPNREQDRPAGREGGGETQYTFSG, LFGGDSGATAGDSDNNGQTPTSPPGTTPPPAGPTDA, and QARLDATPAPTATPGATPSATPSPSPSS. Residues 496-509 show a composition bias toward basic and acidic residues; sequence PNREQDRPAGREGG. Positions 908–919 are enriched in pro residues; sequence TSPPGTTPPPAG. Low complexity predominate over residues 976–990; the sequence is ATPAPTATPGATPSA.

The protein belongs to the UPF0182 family.

It is found in the cell membrane. In Paenarthrobacter aurescens (strain TC1), this protein is UPF0182 protein AAur_2732.